We begin with the raw amino-acid sequence, 347 residues long: Ribosomal RNA large subunit methyltransferase M (347 aa).

Residues S184, 217-220 (APGG), D236, D256, and D272 each bind S-adenosyl-L-methionine. Residue K301 is the Proton acceptor of the active site.

The protein belongs to the class I-like SAM-binding methyltransferase superfamily. RNA methyltransferase RlmE family. RlmM subfamily. In terms of assembly, monomer.

Its subcellular location is the cytoplasm. The catalysed reaction is cytidine(2498) in 23S rRNA + S-adenosyl-L-methionine = 2'-O-methylcytidine(2498) in 23S rRNA + S-adenosyl-L-homocysteine + H(+). In terms of biological role, catalyzes the 2'-O-methylation at nucleotide C2498 in 23S rRNA. The sequence is that of Ribosomal RNA large subunit methyltransferase M from Xanthomonas oryzae pv. oryzae (strain MAFF 311018).